The chain runs to 103 residues: Large ribosomal subunit protein bL21 (103 aa).

It belongs to the bacterial ribosomal protein bL21 family. In terms of assembly, part of the 50S ribosomal subunit. Contacts protein L20.

Functionally, this protein binds to 23S rRNA in the presence of protein L20. In Desulforapulum autotrophicum (strain ATCC 43914 / DSM 3382 / VKM B-1955 / HRM2) (Desulfobacterium autotrophicum), this protein is Large ribosomal subunit protein bL21.